Consider the following 451-residue polypeptide: MRLTRYFMPVLRENPAEAQIVSHRLMLRAGMIKQNAAGIYSWLPLGFKVLRKLENIVHEEQIRAGHVPMLMPTMQSADLWRESGRYDAYGPEMLRIRDRQDRDMLFGPTNEEMITDIFRSHVSSYKDLPLTLYHIQWKFRDEMRPRFGVMRGREFFMKDGYNFDLTKEDALHAYNRHLVSYLRTYERMGLQAIPMRADSGPIGGDDTHEFLVLADTGESEVFYDSAVTDLTFGDRDIDYDSVEQCQGVMEEFTNLYARTDETHDQALFAAIPAERQRQARGIEVGQIFYFGTKYSDAMGAKVQGPDGKPTAVHMGSHGIGVSRLVGAIIEASHDEKGIIWPEGVTPFHCGIVNLKQGDTEADAACDALYASLRALGLDPLYDDRKERAGGKFATMDLIGLPWRITVGPRGLKNGVVELTSRKTGESSELPPEEAIEKIAKIYAPHHVSGNL.

Belongs to the class-II aminoacyl-tRNA synthetase family. ProS type 2 subfamily. As to quaternary structure, homodimer.

Its subcellular location is the cytoplasm. The catalysed reaction is tRNA(Pro) + L-proline + ATP = L-prolyl-tRNA(Pro) + AMP + diphosphate. Catalyzes the attachment of proline to tRNA(Pro) in a two-step reaction: proline is first activated by ATP to form Pro-AMP and then transferred to the acceptor end of tRNA(Pro). In Roseobacter denitrificans (strain ATCC 33942 / OCh 114) (Erythrobacter sp. (strain OCh 114)), this protein is Proline--tRNA ligase.